Consider the following 80-residue polypeptide: Cell division activator CedA (80 aa).

It belongs to the CedA family.

Its function is as follows. Activates the cell division inhibited by chromosomal DNA over-replication. The polypeptide is Cell division activator CedA (Salmonella choleraesuis (strain SC-B67)).